The primary structure comprises 433 residues: GTPase Der (433 aa).

2 EngA-type G domains span residues 3–167 and 175–349; these read KIVS…DKNI and PRIA…FNLR. GTP is bound by residues 9 to 16, 56 to 60, 119 to 122, 181 to 188, 228 to 232, and 293 to 296; these read GRPNVGKS, DTGGY, NKID, DTAGI, and NKWD. A KH-like domain is found at 350–433; sequence LRIKTSLLNK…IPIKILFRLK (84 aa).

The protein belongs to the TRAFAC class TrmE-Era-EngA-EngB-Septin-like GTPase superfamily. EngA (Der) GTPase family. Associates with the 50S ribosomal subunit.

Functionally, GTPase that plays an essential role in the late steps of ribosome biogenesis. This Karelsulcia muelleri (strain GWSS) (Sulcia muelleri) protein is GTPase Der.